Here is a 388-residue protein sequence, read N- to C-terminus: Dual specificity mitogen-activated protein kinase kinase 1 (388 aa).

Residues 1-20 (PIQLNPAPDGSAVNGTSSAE) form a disordered region. Residues 61–356 (FEKISELGAG…LKQLMIHAFI (296 aa)) enclose the Protein kinase domain. ATP contacts are provided by residues 67-75 (LGAGNGGVV) and Lys-90. Catalysis depends on Asp-183, which acts as the Proton acceptor. Residues Ser-211 and Ser-215 each carry the phosphoserine; by RAF modification. The disordered stretch occupies residues 275–299 (DSPVTETSPRQRAPGRPMSSYGSDS).

This sequence belongs to the protein kinase superfamily. STE Ser/Thr protein kinase family. MAP kinase kinase subfamily. Post-translationally, MAPKK is itself dependent on Ser/Thr phosphorylation for activity catalyzed by MAP kinase kinase kinases (RAF or MEKK1).

Its subcellular location is the cytoplasm. It is found in the cytoskeleton. The protein localises to the microtubule organizing center. It localises to the centrosome. The protein resides in the spindle pole body. Its subcellular location is the nucleus. The catalysed reaction is L-seryl-[protein] + ATP = O-phospho-L-seryl-[protein] + ADP + H(+). It catalyses the reaction L-threonyl-[protein] + ATP = O-phospho-L-threonyl-[protein] + ADP + H(+). The enzyme catalyses L-tyrosyl-[protein] + ATP = O-phospho-L-tyrosyl-[protein] + ADP + H(+). Dual specificity protein kinase which acts as an essential component of the MAP kinase signal transduction pathway. Binding of extracellular ligands such as growth factors, cytokines and hormones to their cell-surface receptors activates RAS and this initiates RAF1 activation. RAF1 then further activates the dual-specificity protein kinases MAP2K1/MEK1 and MAP2K2/MEK2. Both MAP2K1/MEK1 and MAP2K2/MEK2 function specifically in the MAPK/ERK cascade, and catalyze the concomitant phosphorylation of a threonine and a tyrosine residue in a Thr-Glu-Tyr sequence located in the extracellular signal-regulated kinases MAPK3/ERK1 and MAPK1/ERK2, leading to their activation and further transduction of the signal within the MAPK/ERK cascade. Depending on the cellular context, this pathway mediates diverse biological functions such as cell growth, adhesion, survival and differentiation predominantly through the regulation of transcription, metabolism and cytoskeletal rearrangements. This is Dual specificity mitogen-activated protein kinase kinase 1 (MAP2K1) from Serinus canaria (Island canary).